The following is a 470-amino-acid chain: Calcitonin gene-related peptide type 1 receptor (470 aa).

Residues 1–23 form the signal peptide; that stretch reads MTASCWTICLFLLGSVTEFIVLA. Topologically, residues 24–147 are extracellular; it reads SPEVNESQQQ…HTTEGRRTAM (124 aa). N28, N74, N126, and N131 each carry an N-linked (GlcNAc...) asparagine glycan. 3 disulfides stabilise this stretch: C56/C82, C73/C113, and C96/C135. The chain crosses the membrane as a helical span at residues 148–172; that stretch reads NLFYLALIGHGLSLTSLFISLGIFF. Over 173–183 the chain is Cytoplasmic; sequence HFKSLSCQRIT. Residues 184-206 form a helical membrane-spanning segment; the sequence is LHKNLFFSFVLNSIITIIWLTAV. At 207–217 the chain is on the extracellular side; sequence ANNQELVQQNP. A helical membrane pass occupies residues 218–246; it reads ISCKISQFIHLYIFGCNYFWMLCEGIYLH. The Cytoplasmic portion of the chain corresponds to 247–260; it reads TLIVVAVFAEKQHL. A helical membrane pass occupies residues 261–281; it reads MWYYLLGWGFPLIPATIHAVA. Topologically, residues 282–297 are extracellular; sequence RSYYYNDNCWISSNTS. A glycan (N-linked (GlcNAc...) asparagine) is linked at N295. Residues 298-322 traverse the membrane as a helical segment; sequence LLYIIHGPICAAMLVNLFFLLNIVR. Over 323–337 the chain is Cytoplasmic; it reads VLITKLKVTHQAKSS. A helical membrane pass occupies residues 338 to 359; sequence LYMKAVRATLILVPLLGIQYVL. Residues 360–374 lie on the Extracellular side of the membrane; sequence LPYKPSGRVSAEIYD. Residues 375-395 form a helical membrane-spanning segment; sequence YIMHILMHYQGLLVATIFCFF. Residues 396-470 lie on the Cytoplasmic side of the membrane; that stretch reads NGEVQAVLRR…AIIKPENPFA (75 aa).

It belongs to the G-protein coupled receptor 2 family.

The protein localises to the cell membrane. In terms of biological role, may function as G protein-coupled receptor for calcitonin-gene-related peptides and adrenomedullin. Specificity may be modulated by accessory proteins. May activate cAMP-dependent pathway. The protein is Calcitonin gene-related peptide type 1 receptor (calcrla) of Danio rerio (Zebrafish).